A 256-amino-acid chain; its full sequence is Transcription factor bHLH131 (256 aa).

In terms of domain architecture, bHLH spans 91-140 (VAAKKHSDAERRRRLRINSQFATLRTILPNLVKQDKASVLGETVRYFNEL).

As to quaternary structure, homodimer.

It is found in the nucleus. This chain is Transcription factor bHLH131 (BHLH131), found in Arabidopsis thaliana (Mouse-ear cress).